The following is a 167-amino-acid chain: Phospholipase A2 imperatoxin-1 (167 aa).

Residues tryptophan 38, glycine 40, and glycine 42 each contribute to the Ca(2+) site. Intrachain disulfides connect cysteine 39–cysteine 61, cysteine 60–cysteine 99, cysteine 67–cysteine 92, cysteine 90–cysteine 127, and cysteine 132–cysteine 144. The active site involves histidine 64. Aspartate 65 serves as a coordination point for Ca(2+). Asparagine 102 carries N-linked (GlcNAc...) asparagine glycosylation. The propeptide occupies 136 to 140 (RRLAR).

This sequence belongs to the phospholipase A2 family. Group III subfamily. In terms of assembly, heterodimer composed of a large subunit and a small subunit; disulfide-linked. The cofactor is Ca(2+). Expressed by the venom gland.

It localises to the secreted. The enzyme catalyses a 1,2-diacyl-sn-glycero-3-phosphocholine + H2O = a 1-acyl-sn-glycero-3-phosphocholine + a fatty acid + H(+). Phospholipase toxin, which may catalyze the calcium-dependent hydrolysis of the 2-acyl groups in 3-sn-phosphoglycerides. Inhibits both skeletal (RYR1) and cardiac (RYR2) ryanodine receptors (calcium release channels). Probably blocks ryanodine receptors by generating a lipid product. The chain is Phospholipase A2 imperatoxin-1 from Pandinus imperator (Emperor scorpion).